The following is a 54-amino-acid chain: Large ribosomal subunit protein bL33B (54 aa).

This sequence belongs to the bacterial ribosomal protein bL33 family.

The chain is Large ribosomal subunit protein bL33B from Myxococcus xanthus (strain DK1622).